A 496-amino-acid polypeptide reads, in one-letter code: ATP synthase subunit beta, chloroplastic (496 aa).

An ATP-binding site is contributed by 170-177 (GGAGVGKT).

This sequence belongs to the ATPase alpha/beta chains family. As to quaternary structure, F-type ATPases have 2 components, CF(1) - the catalytic core - and CF(0) - the membrane proton channel. CF(1) has five subunits: alpha(3), beta(3), gamma(1), delta(1), epsilon(1). CF(0) has four main subunits: a(1), b(1), b'(1) and c(9-12).

The protein localises to the plastid. It is found in the chloroplast thylakoid membrane. The catalysed reaction is ATP + H2O + 4 H(+)(in) = ADP + phosphate + 5 H(+)(out). Functionally, produces ATP from ADP in the presence of a proton gradient across the membrane. The catalytic sites are hosted primarily by the beta subunits. This Dioscorea elephantipes (Elephant's foot yam) protein is ATP synthase subunit beta, chloroplastic.